A 348-amino-acid chain; its full sequence is N-formyl peptide receptor 2 (348 aa).

N-linked (GlcNAc...) asparagine glycosylation occurs at asparagine 1. The Extracellular segment spans residues asparagine 1–isoleucine 24. The helical transmembrane segment at leucine 25–valine 47 threads the bilayer. At alanine 48–threonine 58 the chain is on the cytoplasmic side. The chain crosses the membrane as a helical span at residues isoleucine 59–valine 80. The Extracellular portion of the chain corresponds to serine 81–leucine 97. Cysteine 95 and cysteine 173 are oxidised to a cystine. The chain crosses the membrane as a helical span at residues isoleucine 98 to leucine 118. Over aspartate 119–serine 137 the chain is Cytoplasmic. The helical transmembrane segment at leucine 138–leucine 159 threads the bilayer. Over phenylalanine 160 to arginine 202 the chain is Extracellular. A helical transmembrane segment spans residues phenylalanine 203–alanine 223. Over lysine 224 to valine 239 the chain is Cytoplasmic. The helical transmembrane segment at leucine 240–valine 263 threads the bilayer. Residues tryptophan 264 to proline 283 lie on the Extracellular side of the membrane. The helical transmembrane segment at threonine 284 to glycine 303 threads the bilayer. The Cytoplasmic segment spans residues glutamine 304–methionine 348. The interval serine 323–methionine 348 is disordered.

Belongs to the G-protein coupled receptor 1 family. Interacts with APP; the interaction takes place at the cell surface and the complex is then rapidly internalized.

It is found in the cell membrane. Its function is as follows. Low affinity receptor for N-formyl-methionyl peptides, which are powerful neutrophil chemotactic factors. Binding of FMLP to the receptor causes activation of neutrophils. This response is mediated via a G-protein that activates a phosphatidylinositol-calcium second messenger system. Receptor for the chemokine-like protein FAM19A5, mediating FAM19A5-stimulated macrophage chemotaxis and the inhibitory effect on TNFSF11/RANKL-induced osteoclast differentiation. This is N-formyl peptide receptor 2 (FPR2) from Pongo pygmaeus (Bornean orangutan).